The following is a 1066-amino-acid chain: Cytoplasmic dynein 2 intermediate chain 1 (1066 aa).

2 disordered regions span residues 22–366 and 381–408; these read LWAI…ENAR and YEDDFEVCDGDDDESSNEPESREKLEEL. The residue at position 30 (Ser-30) is a Phosphoserine. 5 stretches are compositionally biased toward basic and acidic residues: residues 30–135, 147–171, 180–256, 264–308, and 316–336; these read SKEE…EELR, ETRDRQLLERAERKGRSVSKVRSEE, DEDR…EERH, GFHF…KRDG, and NLVRNHGKDKDSRRKHGHEEG. Residue Ser-247 is modified to Phosphoserine. Acidic residues-rich tracts occupy residues 351–362 and 381–397; these read ETVEIEKEETDL and YEDDFEVCDGDDDESSN. Over residues 399–408 the composition is skewed to basic and acidic residues; that stretch reads PESREKLEEL. Residues 473–552 form a binding to the DYNLT2B-DYNLT1/DYNLT3 dimer region; it reads ASHRQKSRTQ…DIQTEEIETR (80 aa). WD repeat units follow at residues 694-734, 775-821, 907-947, and 952-992; these read ICES…RLHY, VHKK…KADI, IRPV…PLLQ, and TDSH…LGPV.

This sequence belongs to the dynein light intermediate chain family. Intermediate chain of the cytoplasmic dynein complex 2, a multisubunit complex, composed at least of eleven different proteins. The cytoplasmic dynein 2 complex consists of two catalytic heavy chains (HCs) and a number of non-catalytic subunits presented by intermediate chains (ICs), light intermediate chains (LICs) and light chains (LCs). Among them, a heavy chain (DYNC2H1), two intermediate chains (DYNC2I2 and DYNC2I1), a light intermediate chain (DYNC2LI1), and a light chain (DYNLT2B) are unique to the cytoplasmic dynein complex 2, but a subset of the light chains are also shared by dynein-1 and dynein-2 complexes. Interacts with DYNC2I2; their C-terminal domains each bind a copy of the heavy chain, and their extended N-terminal regions are held together by an array of light chain dimers. Interacts with DYNLT2B. Interacts (via the N-terminal half) with DYNLT2B-DYNLT1 dimer or with DYNLT2B-DYNLT3 dimer; this interaction is crucial for retrograde trafficking of ciliary proteins. As to expression, expressed in chondrocytes (at protein level).

The protein localises to the cell projection. It localises to the cilium. It is found in the cytoplasm. Its subcellular location is the cytoskeleton. The protein resides in the microtubule organizing center. The protein localises to the centrosome. Its function is as follows. Acts as one of several non-catalytic accessory components of the cytoplasmic dynein 2 complex (dynein-2 complex), a motor protein complex that drives the movement of cargos along microtubules within cilia and flagella in concert with the intraflagellar transport (IFT) system. DYNC2I1 plays a major role in retrograde ciliary protein trafficking in cilia and flagella. Also requires to maintain a functional transition zone. This Homo sapiens (Human) protein is Cytoplasmic dynein 2 intermediate chain 1.